A 917-amino-acid polypeptide reads, in one-letter code: Spermatogenesis-associated protein 31D4 (917 aa).

A helical membrane pass occupies residues 29-49; that stretch reads FICLSGLGLFILYLFYMVLTL. Disordered regions lie at residues 55-80, 152-195, and 773-798; these read EKNN…KDRK, SVSP…PPPL, and SQET…RSNS. The segment covering 63–74 has biased composition (basic residues); the sequence is HQGRARRKRKSV. The span at 152–163 shows a compositional bias: low complexity; it reads SVSPLASSASGA. Residues 164 to 177 show a composition bias toward polar residues; it reads ESSFTLASTPSATT. Residues 782-798 show a composition bias toward basic and acidic residues; it reads LLHDPETSSDEDLRSNS.

This sequence belongs to the SPATA31 family.

It localises to the membrane. Functionally, may play a role in spermatogenesis. The sequence is that of Spermatogenesis-associated protein 31D4 (SPATA31D4) from Homo sapiens (Human).